The sequence spans 175 residues: ATP synthase subunit b, chloroplastic (175 aa).

Residues 21 to 40 (LLESNVINIIILISLLIYLG) traverse the membrane as a helical segment.

This sequence belongs to the ATPase B chain family. F-type ATPases have 2 components, F(1) - the catalytic core - and F(0) - the membrane proton channel. F(1) has five subunits: alpha(3), beta(3), gamma(1), delta(1), epsilon(1). F(0) has four main subunits: a(1), b(1), b'(1) and c(10-14). The alpha and beta chains form an alternating ring which encloses part of the gamma chain. F(1) is attached to F(0) by a central stalk formed by the gamma and epsilon chains, while a peripheral stalk is formed by the delta, b and b' chains.

The protein localises to the plastid. It is found in the chloroplast thylakoid membrane. In terms of biological role, f(1)F(0) ATP synthase produces ATP from ADP in the presence of a proton or sodium gradient. F-type ATPases consist of two structural domains, F(1) containing the extramembraneous catalytic core and F(0) containing the membrane proton channel, linked together by a central stalk and a peripheral stalk. During catalysis, ATP synthesis in the catalytic domain of F(1) is coupled via a rotary mechanism of the central stalk subunits to proton translocation. Functionally, component of the F(0) channel, it forms part of the peripheral stalk, linking F(1) to F(0). The sequence is that of ATP synthase subunit b, chloroplastic from Cyanidium caldarium (Red alga).